Reading from the N-terminus, the 181-residue chain is TATA-box-binding protein (181 aa).

Repeat copies occupy residues 8–84 (IENI…VDLM) and 99–175 (IQNI…YDRL).

Belongs to the TBP family.

In terms of biological role, general factor that plays a role in the activation of archaeal genes transcribed by RNA polymerase. Binds specifically to the TATA box promoter element which lies close to the position of transcription initiation. The sequence is that of TATA-box-binding protein from Methanobrevibacter smithii (strain ATCC 35061 / DSM 861 / OCM 144 / PS).